Consider the following 301-residue polypeptide: 5'-3' exonuclease (301 aa).

Positions 182 to 264 (GYADLALLRG…RVAADVPLPD (83 aa)) constitute a 5'-3' exonuclease domain.

In terms of biological role, 5'-3' exonuclease acting preferentially on double-stranded DNA. The polypeptide is 5'-3' exonuclease (Streptomyces coelicolor (strain ATCC BAA-471 / A3(2) / M145)).